An 86-amino-acid polypeptide reads, in one-letter code: Heat shock factor-binding protein (86 aa).

The stretch at 34–63 forms a coiled coil; that stretch reads MSDSIITKIDDMGGRINELEQSINDLRAEM. Residues 42–52 form a required for interactions with heat shock factors (HSFs) region; sequence IDDMGGRINEL. The disordered stretch occupies residues 59-86; the sequence is LRAEMGVEGTPPPASKSGDEPKTPASSS.

Belongs to the HSBP1 family. As to quaternary structure, homohexamer. Interacts with HSFA1A, HSFA1B and HSFA2. Mostly expressed in siliques and flowers, and, to a lower extent, in roots, stems and leaves.

It localises to the nucleus. It is found in the cytoplasm. The protein resides in the cytosol. Functionally, negative regulator of the heat shock (HS) response. Affects negatively HSFA1B DNA-binding capacity in vitro. Involved in acquired thermotolerance but not basal thermotolerance. Crucial for seed development, after fertilization and during embryogenesis. The sequence is that of Heat shock factor-binding protein from Arabidopsis thaliana (Mouse-ear cress).